The sequence spans 574 residues: 5'-nucleotidase (574 aa).

A signal peptide spans 1–26 (MCPRAARAPATLLLALGAVLWPAAGA). Zn(2+)-binding residues include Asp36 and His38. A disulfide bridge links Cys51 with Cys57. N-linked (GlcNAc...) asparagine glycosylation is present at Asn53. Residues Asp85, Asn117, His220, and His243 each coordinate Zn(2+). N-linked (GlcNAc...) asparagine glycans are attached at residues Asn311 and Asn333. 2 disulfide bridges follow: Cys353/Cys358 and Cys365/Cys387. Arg354 contributes to the AMP binding site. Residue Arg354 coordinates IMP. Residues Asn390 and Arg395 each coordinate AMP. IMP is bound by residues Asn390 and Arg395. Asn403 carries N-linked (GlcNAc...) asparagine glycosylation. Phe417 is a binding site for AMP. Residue Phe417 participates in IMP binding. Cysteines 476 and 479 form a disulfide. AMP-binding residues include Phe500 and Asp506. The IMP site is built by Phe500 and Asp506. Ser549 is lipidated: GPI-anchor amidated serine. A propeptide spans 550-574 (TGSHCHGSFSLIFLSLWAVIFVLYQ) (removed in mature form).

Belongs to the 5'-nucleotidase family. As to quaternary structure, homodimer. The cofactor is Zn(2+).

It is found in the cell membrane. The enzyme catalyses a ribonucleoside 5'-phosphate + H2O = a ribonucleoside + phosphate. It catalyses the reaction a 2'-deoxyribonucleoside 5'-phosphate + H2O = a 2'-deoxyribonucleoside + phosphate. It carries out the reaction dTMP + H2O = thymidine + phosphate. The catalysed reaction is CMP + H2O = cytidine + phosphate. The enzyme catalyses IMP + H2O = inosine + phosphate. It catalyses the reaction AMP + H2O = adenosine + phosphate. It carries out the reaction GMP + H2O = guanosine + phosphate. The catalysed reaction is UMP + H2O = uridine + phosphate. The enzyme catalyses dAMP + H2O = 2'-deoxyadenosine + phosphate. It catalyses the reaction dCMP + H2O = 2'-deoxycytidine + phosphate. Inhibited by adenosine 5'-(alpha,beta-methylene)-diphosphate (AMPCP). Its function is as follows. Catalyzes the hydrolysis of nucleotide monophosphates, releasing inorganic phosphate and the corresponding nucleoside, with AMP being the preferred substrate. Shows a preference for ribonucleotide monophosphates over their equivalent deoxyribose forms. Other substrates include IMP, UMP, GMP, CMP, dAMP, dCMP, dTMP, NAD and NMN. In Homo sapiens (Human), this protein is 5'-nucleotidase (NT5E).